We begin with the raw amino-acid sequence, 161 residues long: Dihydrofolate reductase (161 aa).

A DHFR domain is found at 1–160 (MTMVGLIWAQ…LRYRLYSYHR (160 aa)). 7–9 (IWA) contacts substrate. NADP(+) is bound by residues 8–9 (WA) and 16–21 (IGRGGD). Substrate is bound by residues aspartate 29 and arginine 34. 45-48 (GRRT) serves as a coordination point for NADP(+). Position 62 (arginine 62) interacts with substrate. NADP(+) is bound by residues 67–70 (LSRQ), glycine 82, and 96–101 (IGGGQV). Substrate contacts are provided by tyrosine 102 and threonine 115.

It belongs to the dihydrofolate reductase family.

It catalyses the reaction (6S)-5,6,7,8-tetrahydrofolate + NADP(+) = 7,8-dihydrofolate + NADPH + H(+). It participates in cofactor biosynthesis; tetrahydrofolate biosynthesis; 5,6,7,8-tetrahydrofolate from 7,8-dihydrofolate: step 1/1. Key enzyme in folate metabolism. Catalyzes an essential reaction for de novo glycine and purine synthesis, and for DNA precursor synthesis. This chain is Dihydrofolate reductase (folA), found in Mycobacterium tuberculosis (strain CDC 1551 / Oshkosh).